A 244-amino-acid polypeptide reads, in one-letter code: Transcriptional activator protein anr (244 aa).

An a nucleoside 3',5'-cyclic phosphate-binding site is contributed by 21-149 (APLCLPLSLT…RLMSREIRDD (129 aa)). The HTH crp-type domain occupies 159–232 (KTADERIATF…GKEVHILDSI (74 aa)). The H-T-H motif DNA-binding region spans 192-211 (RNEIGNYLGLAVETVSRVFT).

Its function is as follows. Transcriptional activator of anaerobic gene expression. The sequence is that of Transcriptional activator protein anr (anr) from Pseudomonas aeruginosa (strain ATCC 15692 / DSM 22644 / CIP 104116 / JCM 14847 / LMG 12228 / 1C / PRS 101 / PAO1).